We begin with the raw amino-acid sequence, 234 residues long: Thymidylate kinase (234 aa).

Position 11–18 (11–18) interacts with ATP; sequence GLEGSGKT.

It belongs to the thymidylate kinase family.

It carries out the reaction dTMP + ATP = dTDP + ADP. In terms of biological role, phosphorylation of dTMP to form dTDP in both de novo and salvage pathways of dTTP synthesis. The chain is Thymidylate kinase from Wigglesworthia glossinidia brevipalpis.